The sequence spans 191 residues: MEGFFWKTLLVVGALAIGGTSSLPHKPLTYEEAVDLAVSIYNSKSGEDSLYRLLEAVPPPEWDPLSESNQELNFTIKETVCLVAEERSLEECDFQEDGAIMGCTGYYFFGESPPVLVLTCKPVGEEEEQKQEEGNEEEKEVEKEEKEEDEKDQPRRVKRFKKFFKKLKNSVKKRAKKFFKKPRVIGVSIPF.

An N-terminal signal peptide occupies residues 1–22 (MEGFFWKTLLVVGALAIGGTSS). A propeptide spanning residues 23–161 (LPHKPLTYEE…DQPRRVKRFK (139 aa)) is cleaved from the precursor. Intrachain disulfides connect cysteine 81-cysteine 92 and cysteine 103-cysteine 120. Residues 125–151 (EEEEQKQEEGNEEEKEVEKEEKEEDEK) are compositionally biased toward acidic residues. Residues 125–154 (EEEEQKQEEGNEEEKEVEKEEKEEDEKDQP) form a disordered region.

The protein belongs to the cathelicidin family. As to expression, expressed by the venom gland.

Its subcellular location is the secreted. It is found in the target cell membrane. Its function is as follows. Potent antimicrobial peptide against Gram-negative (MIC=0.25 ug/ml against E.coli ATCC 25922, MIC=0.5 ug/ml against P.aeruginosa) and Gram-positive bacteria (MIC=64 ug/ml against E.faecalis, MIC=64 ug/ml against S.aureus). Adopts an amphipathic alpha helical conformation, that may allow to partition into the target membrane. Low hemolytic activities have been observed on mammalian cells. In Ophiophagus hannah (King cobra), this protein is Cathelicidin-related peptide Oh-Cath.